Consider the following 434-residue polypeptide: Glutamyl-tRNA reductase (434 aa).

Residues 49 to 52, Ser-109, 114 to 116, and Gln-120 contribute to the substrate site; these read TCNR and EPQ. Cys-50 serves as the catalytic Nucleophile. Residue 189 to 194 participates in NADP(+) binding; that stretch reads GAGEMC.

This sequence belongs to the glutamyl-tRNA reductase family. As to quaternary structure, homodimer.

The enzyme catalyses (S)-4-amino-5-oxopentanoate + tRNA(Glu) + NADP(+) = L-glutamyl-tRNA(Glu) + NADPH + H(+). It functions in the pathway porphyrin-containing compound metabolism; protoporphyrin-IX biosynthesis; 5-aminolevulinate from L-glutamyl-tRNA(Glu): step 1/2. Its function is as follows. Catalyzes the NADPH-dependent reduction of glutamyl-tRNA(Glu) to glutamate 1-semialdehyde (GSA). The protein is Glutamyl-tRNA reductase of Geobacter metallireducens (strain ATCC 53774 / DSM 7210 / GS-15).